The primary structure comprises 369 residues: Phosphoribosyl pyrophosphate synthase-associated protein 2 (369 aa).

Residue Met1 is modified to N-acetylmethionine. Phosphoserine is present on residues Ser219, Ser227, and Ser233.

This sequence belongs to the ribose-phosphate pyrophosphokinase family. In terms of assembly, binds to PRPS1 and PRPS2. Ubiquitous.

Its function is as follows. Seems to play a negative regulatory role in 5-phosphoribose 1-diphosphate synthesis. This is Phosphoribosyl pyrophosphate synthase-associated protein 2 (Prpsap2) from Rattus norvegicus (Rat).